Reading from the N-terminus, the 309-residue chain is NAD kinase (309 aa).

The active-site Proton acceptor is the Asp-89. NAD(+) is bound by residues 89–90 (DG), 163–164 (NE), His-174, Arg-191, Asp-193, and 204–209 (TAYSLS).

Belongs to the NAD kinase family. A divalent metal cation is required as a cofactor.

The protein resides in the cytoplasm. The catalysed reaction is NAD(+) + ATP = ADP + NADP(+) + H(+). Involved in the regulation of the intracellular balance of NAD and NADP, and is a key enzyme in the biosynthesis of NADP. Catalyzes specifically the phosphorylation on 2'-hydroxyl of the adenosine moiety of NAD to yield NADP. In Shewanella denitrificans (strain OS217 / ATCC BAA-1090 / DSM 15013), this protein is NAD kinase.